The sequence spans 558 residues: Dihydroxy-acid dehydratase (558 aa).

Residue cysteine 50 participates in [2Fe-2S] cluster binding. Residue aspartate 82 participates in Mg(2+) binding. Cysteine 123 provides a ligand contact to [2Fe-2S] cluster. Aspartate 124 and lysine 125 together coordinate Mg(2+). Lysine 125 bears the N6-carboxylysine mark. [2Fe-2S] cluster is bound at residue cysteine 195. Glutamate 447 is a Mg(2+) binding site. Serine 472 serves as the catalytic Proton acceptor.

It belongs to the IlvD/Edd family. Homodimer. Requires [2Fe-2S] cluster as cofactor. Mg(2+) is required as a cofactor.

The enzyme catalyses (2R)-2,3-dihydroxy-3-methylbutanoate = 3-methyl-2-oxobutanoate + H2O. It catalyses the reaction (2R,3R)-2,3-dihydroxy-3-methylpentanoate = (S)-3-methyl-2-oxopentanoate + H2O. It participates in amino-acid biosynthesis; L-isoleucine biosynthesis; L-isoleucine from 2-oxobutanoate: step 3/4. The protein operates within amino-acid biosynthesis; L-valine biosynthesis; L-valine from pyruvate: step 3/4. Functionally, functions in the biosynthesis of branched-chain amino acids. Catalyzes the dehydration of (2R,3R)-2,3-dihydroxy-3-methylpentanoate (2,3-dihydroxy-3-methylvalerate) into 2-oxo-3-methylpentanoate (2-oxo-3-methylvalerate) and of (2R)-2,3-dihydroxy-3-methylbutanoate (2,3-dihydroxyisovalerate) into 2-oxo-3-methylbutanoate (2-oxoisovalerate), the penultimate precursor to L-isoleucine and L-valine, respectively. This is Dihydroxy-acid dehydratase from Saccharolobus islandicus (strain M.16.27) (Sulfolobus islandicus).